A 112-amino-acid polypeptide reads, in one-letter code: Ig kappa chain V-II region MOPC 167 (112 aa).

Positions 1–23 are framework-1; sequence DIVITQDELSNPVTSGESVSISC. Cys-23 and Cys-93 are oxidised to a cystine. The interval 24–39 is complementarity-determining-1; that stretch reads RSSKSLLYKDGKTYLN. The framework-2 stretch occupies residues 40-54; that stretch reads WFLQRPGQSPQLLIS. The interval 55–61 is complementarity-determining-2; it reads LMSTRAS. The segment at 62–93 is framework-3; the sequence is GVSDRFSGSGSRTDFTLEISRVKAEDVGVYYC. Residues 94 to 102 are complementarity-determining-3; it reads QQLVEYPLT. The interval 103–112 is framework-4; sequence FGAGTKLELK.

The sequence is that of Ig kappa chain V-II region MOPC 167 from Mus musculus (Mouse).